The sequence spans 480 residues: MYSGSSDGESHDTSTQRKIPPASSMLWVRNLRRYIGSGAGLGSEALMELETKRILLEIFKEKQQKSQEAGTIPSFYKKKPEEGSISQRVQKLAKYRFLKKQSDLLLNADDLAAMWVCLRENCVIDDATGAEKMNYEDFCHIASVCTEQIGPKCRRFFSPSNFMKFEKDEAGRIAILPFYLYVMRTVSLTQARIDMSELDEDSDGFLHSDEMESYIGGLIPNLAQLRDMPPAFNQMYCRIASQKFFFFCDPHRRGRACIKKILLSNCLQELMELHQESEEEVTDTEQAENWFSLTSAQRICDMFLALDKDMSGSLCKQELKEYADGTLTEIFIERVFDEHVRRGKIVAGNSREMDFDSFLDFVLALENKDTPEGLTYLFRCLDLQGRGFLTTADIHSLFRDVHQKWIEGGNYELCIEDVRDEIWDMVKPSDPLKITLGDLLGCKQGGTVASMLIDVRGFWAHDNRENLLQEEEEPPEEESQ.

EF-hand domains follow at residues 186 to 221, 294 to 329, and 369 to 404; these read VSLTQARIDMSELDEDSDGFLHSDEMESYIGGLIPN, TSAQRICDMFLALDKDMSGSLCKQELKEYADGTLTE, and DTPEGLTYLFRCLDLQGRGFLTTADIHSLFRDVHQK. 5 residues coordinate Ca(2+): aspartate 307, aspartate 309, serine 311, serine 313, and glutamate 318.

In terms of assembly, interacts with PP2AA1. As to expression, widely expressed.

It is found in the cytoplasm. The protein localises to the cytoskeleton. In terms of biological role, probable regulatory subunit of type 2A protein phosphatase involved in the control of the dynamic organization of the cortical cytoskeleton. Plays an important role in the organization of interphase microtubule arrays in part through the regulation of nucleation geometry. Required for the reorganization of cortical arrays in response to light. The polypeptide is Probable serine/threonine-protein phosphatase 2A regulatory subunit B'' subunit TON2 (TON2) (Arabidopsis thaliana (Mouse-ear cress)).